The chain runs to 393 residues: MNSSYKSRVFNIISIIMVSMLILSLGAFANNNKAKADSHSKQLEINVKSDKVPQKVKDLAQQQFAGYAKALDKQSNAKTGKYELGEAFKIYKFNGEEDNSYYYPVIKDGKIVYTLTLSPKNKDDLNKSKEDMNYSVKISNFIAKDLDQIKDKNSNITVLTDEKGFYFEEDGKVRLVKATPLPGNVKEKESAKTVSAKLKQELKNTVTPTKVEENEAIQEDQVQYENTLKNFKIREQQFDNSWCAGFSMAALLNATKNTDTYNAHDIMRTLYPEVSEQDLPNCSTFPNQMIEYGKSQGRDIHYQEGVPSYEQVDQLTKDNVGIMILAQSVSQNPNDPHLGHALAVVGNAKINDQEKLIYWNPWDTELSIQDADSSLLHLSFNRDYNWYGSMIGY.

Residues 1-36 (MNSSYKSRVFNIISIIMVSMLILSLGAFANNNKAKA) form the signal peptide. A propeptide spanning residues 37–219 (DSHSKQLEIN…KVEENEAIQE (183 aa)) is cleaved from the precursor. Residues Cys243, His340, and Asn360 contribute to the active site.

The protein belongs to the peptidase C47 family. As to quaternary structure, in the cytoplasm, prematurely activated/folded SspB forms a stable non-covalent complex with SspC. Proteolytically cleaved by staphylococcal serine protease (SspA).

The protein resides in the secreted. With respect to regulation, prematurely activated/folded staphopain B is inhibited by staphostatin B (SspC), which is probably required to protect staphylococcal cytoplasmic proteins from degradation by SspB. In terms of biological role, cysteine protease that plays an important role in the inhibition of host innate immune response. Degrades host elastin, fibrogen, fibronectin and kininogen. Blocks phagocytosis of opsonised S.aureus by neutrophils and monocytes by inducing their death in a proteolytic activity-dependent manner. Decreases surface expression of the 'don't eat me' signal CD31 on neutrophils. Cleaves host galectin-3/LGALS3, thereby inhibiting the neutrophil-activating ability of the lectin. The polypeptide is Staphopain B (sspB) (Staphylococcus aureus (strain Mu50 / ATCC 700699)).